Consider the following 832-residue polypeptide: Cation/H(+) antiporter 21 (832 aa).

A run of 12 helical transmembrane segments spans residues Ile-33 to Tyr-55, Leu-61 to Leu-81, Leu-99 to Leu-119, Val-132 to Leu-152, Ile-161 to Ala-181, Cys-200 to Phe-220, Ser-236 to Phe-256, Ile-278 to Phe-298, Phe-319 to Gly-339, Val-352 to Leu-372, Gly-379 to Ala-399, and His-413 to Tyr-433. Residues Arg-792–Pro-802 are compositionally biased toward polar residues. Residues Arg-792 to Arg-832 are disordered.

It belongs to the monovalent cation:proton antiporter 2 (CPA2) transporter (TC 2.A.37) family. CHX (TC 2.A.37.4) subfamily. As to expression, specifically expressed in root endodermal cells. Expressed in seedlings, roots, leaves, flowers, flower buds and pollen.

Its subcellular location is the cell membrane. Its function is as follows. Operates as a Na(+)/H(+) antiporter that plays a role in regulation of xylem Na(+) concentration and, consequently, Na(+) accumulation in the leaf. Required for pollen tube guidance, but not for normal pollen development. May also be involved in the development or function of the female gametophyte. This is Cation/H(+) antiporter 21 (CHX21) from Arabidopsis thaliana (Mouse-ear cress).